Here is a 53-residue protein sequence, read N- to C-terminus: Large ribosomal subunit protein eL40 (53 aa).

It belongs to the eukaryotic ribosomal protein eL40 family.

The chain is Large ribosomal subunit protein eL40 from Pyrobaculum islandicum (strain DSM 4184 / JCM 9189 / GEO3).